The following is a 511-amino-acid chain: Prolyl 3-hydroxylase OGFOD1 (511 aa).

Residues 1–20 (MTGKRGTAAGTDGSGNKKGK) are disordered. In terms of domain architecture, Fe2OG dioxygenase spans 138–240 (KTVDISCAQY…RLSVSGWFHG (103 aa)). The Fe cation site is built by His-156 and Asp-158. 2-oxoglutarate is bound at residue Tyr-170. Fe cation is bound at residue His-219. Arg-231 contributes to the 2-oxoglutarate binding site. Residues 372–403 (NEESDEGEGPSEPNTVSQQGASSEDDKVPSCS) form a disordered region.

It belongs to the TPA1 family. In terms of assembly, monomer. It depends on Fe(2+) as a cofactor. The cofactor is L-ascorbate.

It is found in the cytoplasm. Its subcellular location is the nucleus. It carries out the reaction [ribosomal protein uS12]-L-proline + 2-oxoglutarate + O2 = [ribosomal protein uS12]-(3S)-3-hydroxy-L-proline + succinate + CO2. Functionally, prolyl 3-hydroxylase that catalyzes 3-hydroxylation of 'Pro-62' of small ribosomal subunit uS12 (rps23), thereby regulating protein translation termination efficiency. Involved in stress granule formation. This is Prolyl 3-hydroxylase OGFOD1 (ogfod1) from Xenopus laevis (African clawed frog).